We begin with the raw amino-acid sequence, 312 residues long: DNA-directed RNA polymerase subunit alpha (312 aa).

An alpha N-terminal domain (alpha-NTD) region spans residues 1 to 227; that stretch reads MNNFYIKCLK…SFFSSLLENK (227 aa). The tract at residues 243-312 is alpha C-terminal domain (alpha-CTD); sequence PKNPHTNIAI…KNKLGIVLSN (70 aa).

This sequence belongs to the RNA polymerase alpha chain family. In plastids the minimal PEP RNA polymerase catalytic core is composed of four subunits: alpha, beta, beta', and beta''. When a (nuclear-encoded) sigma factor is associated with the core the holoenzyme is formed, which can initiate transcription.

The protein resides in the plastid. The protein localises to the chloroplast. The catalysed reaction is RNA(n) + a ribonucleoside 5'-triphosphate = RNA(n+1) + diphosphate. Functionally, DNA-dependent RNA polymerase catalyzes the transcription of DNA into RNA using the four ribonucleoside triphosphates as substrates. In Trieres chinensis (Marine centric diatom), this protein is DNA-directed RNA polymerase subunit alpha.